A 523-amino-acid polypeptide reads, in one-letter code: FAD:protein FMN transferase (523 aa).

A run of 3 helical transmembrane segments spans residues 88 to 108 (LLAG…VALA), 118 to 138 (GGAA…LVLL), and 169 to 189 (GLAL…TAPA). Residues 277–279 (LFD) and D336 each bind FAD. A339 serves as a coordination point for Mg(2+). FAD contacts are provided by residues K342 and 423 to 425 (HII). Mg(2+)-binding residues include D450 and T454.

This sequence in the N-terminal section; belongs to the RseC family. In the C-terminal section; belongs to the ApbE family. The cofactor is Mg(2+).

The protein localises to the cell membrane. It catalyses the reaction L-threonyl-[protein] + FAD = FMN-L-threonyl-[protein] + AMP + H(+). Its function is as follows. Flavin transferase that catalyzes the transfer of the FMN moiety of FAD and its covalent binding to the hydroxyl group of a threonine residue in a target flavoprotein. Is likely involved in the modification of RnfG and RnfD. Required for nitrogen fixation. This Rhodobacter capsulatus (Rhodopseudomonas capsulata) protein is FAD:protein FMN transferase.